The following is a 100-amino-acid chain: Non-histone chromosomal protein HMG-14 (100 aa).

Positions 1-100 (MPKRKVSSAE…EAGEKEAKSD (100 aa)) are disordered. Ser7 bears the ADP-ribosylserine mark. Ser8 carries the post-translational modification Phosphoserine. Position 14 is an N6-acetyllysine (Lys14). Position 21 is a phosphoserine; by RPS6KA5 (Ser21). Residue Ser25 is modified to ADP-ribosylserine; alternate. Residue Ser25 is modified to Phosphoserine; alternate; by RPS6KA5. Lys27 is modified (N6-acetyllysine). Composition is skewed to basic and acidic residues over residues 30–50 (AKVEAKPKKAAAKDKSSDKKV) and 69–85 (ETKEDLPAENGETKTEE). Thr81 carries the post-translational modification Phosphothreonine. N6-acetyllysine is present on Lys82. A phosphoserine mark is found at Ser86, Ser89, and Ser99.

In terms of assembly, interacts with transcriptional regulator SEHBP. In terms of processing, phosphorylation on Ser-21 and Ser-25 weakens binding to nucleosomes and increases the rate of H3 phosphorylation. Phosphorylation favors cytoplasmic localization.

The protein localises to the nucleus. It is found in the cytoplasm. Its function is as follows. Binds to the inner side of the nucleosomal DNA thus altering the interaction between the DNA and the histone octamer. May be involved in the process which maintains transcribable genes in a unique chromatin conformation. Inhibits the phosphorylation of nucleosomal histones H3 and H2A by RPS6KA5/MSK1 and RPS6KA3/RSK2. The chain is Non-histone chromosomal protein HMG-14 (HMGN1) from Homo sapiens (Human).